A 372-amino-acid polypeptide reads, in one-letter code: Cytoplasmic tRNA 2-thiolation protein 1 (372 aa).

A disordered region spans residues 335 to 372; that stretch reads GKKEDGGCGSGGGGCGCAGAADETENEETRKRLKDLQF. Residues 341-351 are compositionally biased toward gly residues; that stretch reads GCGSGGGGCGC. Basic and acidic residues predominate over residues 361–372; it reads EETRKRLKDLQF.

The protein belongs to the TtcA family. CTU1/NCS6/ATPBD3 subfamily.

Its subcellular location is the cytoplasm. It participates in tRNA modification; 5-methoxycarbonylmethyl-2-thiouridine-tRNA biosynthesis. Its function is as follows. Plays a central role in 2-thiolation of mcm(5)S(2)U at tRNA wobble positions of tRNA(Lys), tRNA(Glu) and tRNA(Gln). Directly binds tRNAs and probably acts by catalyzing adenylation of tRNAs, an intermediate required for 2-thiolation. It is unclear whether it acts as a sulfurtransferase that transfers sulfur from thiocarboxylated URM1 onto the uridine of tRNAs at wobble position. The protein is Cytoplasmic tRNA 2-thiolation protein 1 of Caenorhabditis briggsae.